Reading from the N-terminus, the 362-residue chain is MAFDLKLTACLLLAVFSLAAAADCECQPSDEGHDAAKSRTLKVIAIFCILVGSSAGCAIPSLGRRFPALRPDTSLFFALKAFAAGVILATAFVHILPVSFDKLGSPCLVDGPWRKYPFTGLVAMLAAVATLLLDTIATGYFLQRAQDSRGAVAAVAACGGDASSSHDHERGNAHGVSSAVIASATMPNDAADDCDDAEDRAKLVRHRVISQVFELGIIVHSIIIGISLGASESPSTIRPLVAALTFHQFFEGIGLGGCIVQARFHLKSAVTMAIFFSLTTPVGIMIGIGISSAYNENSPTALIVEGILDAAAAGILNYMALVDLLAEDFMNPRVRKSGRLQLIISILLLVGIALMSLLGIWA.

The signal sequence occupies residues 1–21 (MAFDLKLTACLLLAVFSLAAA). The Extracellular portion of the chain corresponds to 22–42 (ADCECQPSDEGHDAAKSRTLK). The helical transmembrane segment at 43-63 (VIAIFCILVGSSAGCAIPSLG) threads the bilayer. Residues 64–74 (RRFPALRPDTS) are Cytoplasmic-facing. The chain crosses the membrane as a helical span at residues 75-95 (LFFALKAFAAGVILATAFVHI). The Extracellular portion of the chain corresponds to 96-120 (LPVSFDKLGSPCLVDGPWRKYPFTG). Residues 121–141 (LVAMLAAVATLLLDTIATGYF) form a helical membrane-spanning segment. The Cytoplasmic portion of the chain corresponds to 142–207 (LQRAQDSRGA…EDRAKLVRHR (66 aa)). A helical membrane pass occupies residues 208–228 (VISQVFELGIIVHSIIIGISL). Residues 229–239 (GASESPSTIRP) are Extracellular-facing. The chain crosses the membrane as a helical span at residues 240-260 (LVAALTFHQFFEGIGLGGCIV). Residues 261-269 (QARFHLKSA) are Cytoplasmic-facing. A helical membrane pass occupies residues 270–290 (VTMAIFFSLTTPVGIMIGIGI). Residues 291 to 301 (SSAYNENSPTA) lie on the Extracellular side of the membrane. Residues 302–322 (LIVEGILDAAAAGILNYMALV) form a helical membrane-spanning segment. The Cytoplasmic portion of the chain corresponds to 323 to 341 (DLLAEDFMNPRVRKSGRLQ). Residues 342 to 362 (LIISILLLVGIALMSLLGIWA) form a helical membrane-spanning segment.

This sequence belongs to the ZIP transporter (TC 2.A.5) family.

Its subcellular location is the cell membrane. In terms of biological role, zinc transporter that may be involved in zinc uptake from the rhizosphere. In Oryza sativa subsp. japonica (Rice), this protein is Zinc transporter 9 (ZIP9).